The primary structure comprises 212 residues: Leucyl/phenylalanyl-tRNA--protein transferase (212 aa).

Belongs to the L/F-transferase family.

It is found in the cytoplasm. It catalyses the reaction N-terminal L-lysyl-[protein] + L-leucyl-tRNA(Leu) = N-terminal L-leucyl-L-lysyl-[protein] + tRNA(Leu) + H(+). It carries out the reaction N-terminal L-arginyl-[protein] + L-leucyl-tRNA(Leu) = N-terminal L-leucyl-L-arginyl-[protein] + tRNA(Leu) + H(+). The enzyme catalyses L-phenylalanyl-tRNA(Phe) + an N-terminal L-alpha-aminoacyl-[protein] = an N-terminal L-phenylalanyl-L-alpha-aminoacyl-[protein] + tRNA(Phe). Its function is as follows. Functions in the N-end rule pathway of protein degradation where it conjugates Leu, Phe and, less efficiently, Met from aminoacyl-tRNAs to the N-termini of proteins containing an N-terminal arginine or lysine. This is Leucyl/phenylalanyl-tRNA--protein transferase from Jannaschia sp. (strain CCS1).